The chain runs to 638 residues: Cytoplasmic dynein 1 intermediate chain 2 (638 aa).

Basic and acidic residues-rich tracts occupy residues 1-13 and 20-43; these read MSDK…ELER and QIRE…KKEA. Disordered regions lie at residues 1–135 and 155–214; these read MSDK…GRGP and TYTK…EEKQ. Ser-2 is subject to N-acetylserine. Ser-51 bears the Diphosphoserine mark. 5 positions are modified to phosphoserine: Ser-51, Ser-73, Trp-81, Pro-84, and Ser-90. Positions 88–97 are enriched in low complexity; sequence PSSKSVSTPS. At Thr-95 the chain carries Phosphothreonine. Residues Ser-97, Ser-101, and Ser-104 each carry the phosphoserine modification. Basic and acidic residues predominate over residues 190-214; the sequence is EKTLKKDEENDSKAPPHELTEEEKQ. 7 WD repeats span residues 277–326, 330–370, 379–420, 429–469, 474–519, 522–562, and 568–607; these read SKHR…TTPE, HCQS…RTPV, AHTH…HPQD, SKAV…AGIS, GHQG…PLYS, DNAD…EVPT, and EGNP…AVPR.

Belongs to the dynein intermediate chain family. Homodimer. The cytoplasmic dynein 1 complex consists of two catalytic heavy chains (HCs) and a number of non-catalytic subunits presented by intermediate chains (ICs), light intermediate chains (LICs) and light chains (LCs); the composition seems to vary in respect to the IC, LIC and LC composition. The heavy chain homodimer serves as a scaffold for the probable homodimeric assembly of the respective non-catalytic subunits. The ICs and LICs bind directly to the HC dimer and the LCs assemble on the IC dimer. Interacts with DYNLT3. Interacts with DYNLT1. Interacts (dephosphorylated at Ser-90) with DCTN1. Interacts with BICD2. Interacts with SPEF2. Interacts with CFAP61. In terms of assembly, (Microbial infection) Interacts with human adenovirus 5 hexon protein; this interaction probably allows virus intracellular transport. Post-translationally, the phosphorylation status of Ser-90 appears to be involved in dynactin-dependent target binding. Pyrophosphorylation by 5-diphosphoinositol pentakisphosphate (5-IP7) promotes interaction with DCTN1. Serine pyrophosphorylation is achieved by Mg(2+)-dependent, but enzyme independent transfer of a beta-phosphate from a inositol pyrophosphate to a pre-phosphorylated serine residue.

The protein resides in the cytoplasm. The protein localises to the cytoskeleton. Functionally, acts as one of several non-catalytic accessory components of the cytoplasmic dynein 1 complex that are thought to be involved in linking dynein to cargos and to adapter proteins that regulate dynein function. Cytoplasmic dynein 1 acts as a motor for the intracellular retrograde motility of vesicles and organelles along microtubules. The intermediate chains mediate the binding of dynein to dynactin via its 150 kDa component (p150-glued) DCTN1. Involved in membrane-transport, such as Golgi apparatus, late endosomes and lysosomes. This Homo sapiens (Human) protein is Cytoplasmic dynein 1 intermediate chain 2.